The primary structure comprises 33 residues: Cyanophlyctin-beta (33 aa).

Cys-27 and Cys-33 form a disulfide bridge.

In terms of tissue distribution, expressed by the skin glands.

It localises to the secreted. Antimicrobial peptide active against E.coli (MIC=5 uM), K.pneumoniae (MIC=10 uM), B.cereus (MIC=7 uM) and S.aureus (MIC=12 uM). Has very little hemolytic activity. In Euphlyctis cyanophlyctis (Skittering frog), this protein is Cyanophlyctin-beta.